The following is a 242-amino-acid chain: tRNA (guanine-N(1)-)-methyltransferase (242 aa).

S-adenosyl-L-methionine is bound by residues G113 and I133–L138.

It belongs to the RNA methyltransferase TrmD family. As to quaternary structure, homodimer.

The protein resides in the cytoplasm. The catalysed reaction is guanosine(37) in tRNA + S-adenosyl-L-methionine = N(1)-methylguanosine(37) in tRNA + S-adenosyl-L-homocysteine + H(+). Specifically methylates guanosine-37 in various tRNAs. This Shewanella sediminis (strain HAW-EB3) protein is tRNA (guanine-N(1)-)-methyltransferase.